Reading from the N-terminus, the 340-residue chain is Capsid protein alpha (340 aa).

The segment at 1-39 is disordered; the sequence is MVRKGDKKLAKPPTTKAANSQPRRRATQRRRSGRADAPL. The span at 22 to 32 shows a compositional bias: basic residues; that stretch reads PRRRATQRRRS.

Belongs to the peptidase A6 family.

The protein resides in the virion. Capsid protein alpha self-assembles to form an icosahedral procapsid with a T=3 symmetry, about 30 nm in diameter, and consisting of 60 capsid proteins trimers. The capsid encapsulates the two genomic RNAs. This is Capsid protein alpha (alpha) from Striped jack nervous necrosis virus (SjNNV).